Reading from the N-terminus, the 170-residue chain is Ecotin (170 aa).

The signal sequence occupies residues 1 to 21 (MNKASVVFSGLLMAVSASAIA). Cysteine 78 and cysteine 115 are oxidised to a cystine.

The protein belongs to the protease inhibitor I11 (ecotin) family. Homodimer.

It is found in the periplasm. General inhibitor of pancreatic serine proteases: inhibits chymotrypsin, trypsin, elastases, factor X, kallikrein as well as a variety of other proteases. The polypeptide is Ecotin (Serratia proteamaculans (strain 568)).